Consider the following 369-residue polypeptide: Glutamate 5-kinase (369 aa).

Lysine 9 is an ATP binding site. Serine 49, aspartate 136, and asparagine 148 together coordinate substrate. Residues 168-169 (TD) and 210-216 (TGGMLTK) each bind ATP. The region spanning 275–355 (QGSIWVDKGA…KGVLIYRDDW (81 aa)) is the PUA domain.

The protein belongs to the glutamate 5-kinase family.

The protein resides in the cytoplasm. It catalyses the reaction L-glutamate + ATP = L-glutamyl 5-phosphate + ADP. Its pathway is amino-acid biosynthesis; L-proline biosynthesis; L-glutamate 5-semialdehyde from L-glutamate: step 1/2. In terms of biological role, catalyzes the transfer of a phosphate group to glutamate to form L-glutamate 5-phosphate. In Streptococcus pneumoniae serotype 2 (strain D39 / NCTC 7466), this protein is Glutamate 5-kinase.